Consider the following 371-residue polypeptide: Cytochrome b (371 aa).

4 consecutive transmembrane segments (helical) span residues phenylalanine 25–isoleucine 45, tryptophan 69–isoleucine 90, tryptophan 105–leucine 125, and phenylalanine 170–isoleucine 190. Residues histidine 75 and histidine 89 each contribute to the heme b site. Positions 174 and 188 each coordinate heme b. An a ubiquinone-binding site is contributed by histidine 193. A run of 4 helical transmembrane segments spans residues tyrosine 218–serine 238, leucine 280–histidine 300, leucine 312–serine 332, and phenylalanine 339–proline 358.

It belongs to the cytochrome b family. As to quaternary structure, the cytochrome bc1 complex contains 3 respiratory subunits (MT-CYB, CYC1 and UQCRFS1), 2 core proteins (UQCRC1 and UQCRC2) and probably 6 low-molecular weight proteins. Heme b is required as a cofactor.

The protein resides in the mitochondrion inner membrane. In terms of biological role, component of the ubiquinol-cytochrome c reductase complex (complex III or cytochrome b-c1 complex) that is part of the mitochondrial respiratory chain. The b-c1 complex mediates electron transfer from ubiquinol to cytochrome c. Contributes to the generation of a proton gradient across the mitochondrial membrane that is then used for ATP synthesis. The sequence is that of Cytochrome b (MT-CYB) from Sinomicrurus kelloggi (Kellogg's coral snake).